We begin with the raw amino-acid sequence, 111 residues long: High mobility group protein Z (111 aa).

A DNA-binding region (HMG box) is located at residues 6 to 72 (PKRPLSAYML…EYNKAVKEYE (67 aa)). S11 bears the Phosphoserine mark. A disordered region spans residues 72-111 (EANGGTDSGAPKKRKKAAAKPAKKAKKKESSEEEEEDESE). The segment covering 82-98 (PKKRKKAAAKPAKKAKK) has biased composition (basic residues). Over residues 102-111 (SEEEEEDESE) the composition is skewed to acidic residues.

The protein belongs to the HMGB family.

The protein localises to the nucleus. Its subcellular location is the chromosome. This chain is High mobility group protein Z (HmgZ), found in Drosophila melanogaster (Fruit fly).